The chain runs to 268 residues: Glutamate racemase (268 aa).

Substrate contacts are provided by residues 9-10 (DS) and 41-42 (YG). Cys73 functions as the Proton donor/acceptor in the catalytic mechanism. Residue 74–75 (NS) coordinates substrate. The active-site Proton donor/acceptor is Cys183. Residue 184 to 185 (TH) coordinates substrate.

This sequence belongs to the aspartate/glutamate racemases family.

It carries out the reaction L-glutamate = D-glutamate. The protein operates within cell wall biogenesis; peptidoglycan biosynthesis. In terms of biological role, provides the (R)-glutamate required for cell wall biosynthesis. The protein is Glutamate racemase of Shewanella piezotolerans (strain WP3 / JCM 13877).